The sequence spans 226 residues: Ras-related protein RGP1 (226 aa).

Position 25-32 (25-32) interacts with GTP; the sequence is GDSAVGKS. The Effector region signature appears at 47 to 55; it reads SKATIGVEF. Residues 73–77 and 131–134 each bind GTP; these read DTAGQ and NKSD. S-geranylgeranyl cysteine attachment occurs at residues Cys-223 and Cys-224.

This sequence belongs to the small GTPase superfamily. Rab family.

The protein localises to the cell membrane. May play an important role in plant growth and development. This Oryza sativa subsp. japonica (Rice) protein is Ras-related protein RGP1 (RGP1).